Here is a 351-residue protein sequence, read N- to C-terminus: DNA polymerase IV (351 aa).

The 182-residue stretch at 4 to 185 (IIHVDMDCFF…LPLAKIPGVG (182 aa)) folds into the UmuC domain. Mg(2+) is bound by residues aspartate 8 and aspartate 103. The active site involves glutamate 104.

Belongs to the DNA polymerase type-Y family. Monomer. Mg(2+) is required as a cofactor.

The protein localises to the cytoplasm. It catalyses the reaction DNA(n) + a 2'-deoxyribonucleoside 5'-triphosphate = DNA(n+1) + diphosphate. Its function is as follows. Poorly processive, error-prone DNA polymerase involved in untargeted mutagenesis. Copies undamaged DNA at stalled replication forks, which arise in vivo from mismatched or misaligned primer ends. These misaligned primers can be extended by PolIV. Exhibits no 3'-5' exonuclease (proofreading) activity. May be involved in translesional synthesis, in conjunction with the beta clamp from PolIII. In Salmonella choleraesuis (strain SC-B67), this protein is DNA polymerase IV.